Here is a 65-residue protein sequence, read N- to C-terminus: Disintegrin VLO4 (65 aa).

The 65-residue stretch at 1–65 (MNSGNPCCDP…PDCPRNPWKG (65 aa)) folds into the Disintegrin domain. Cystine bridges form between cysteine 7–cysteine 30, cysteine 21–cysteine 27, cysteine 26–cysteine 51, and cysteine 39–cysteine 58. The short motif at 43 to 45 (RGD) is the Cell attachment site element.

Belongs to the disintegrin family. Dimeric disintegrin subfamily. As to quaternary structure, homodimer; disulfide-linked. Expressed by the venom gland.

It localises to the secreted. Poor inhibitor of platelet aggregation. The disintegrin inhibits the adhesion of cells expressing the RGD-dependent integrin alpha-5/beta-1 (ITGA5/ITGB1) to immobilized fibronectin. Inhibition on alpha-2b/beta-3 (ITGA2B/ITGB3) is low. This is Disintegrin VLO4 from Macrovipera lebetina obtusa (Levant blunt-nosed viper).